A 368-amino-acid polypeptide reads, in one-letter code: Phosphoribosylaminoimidazole-succinocarboxamide synthase (368 aa).

This sequence belongs to the SAICAR synthetase family.

It carries out the reaction 5-amino-1-(5-phospho-D-ribosyl)imidazole-4-carboxylate + L-aspartate + ATP = (2S)-2-[5-amino-1-(5-phospho-beta-D-ribosyl)imidazole-4-carboxamido]succinate + ADP + phosphate + 2 H(+). Its pathway is purine metabolism; IMP biosynthesis via de novo pathway; 5-amino-1-(5-phospho-D-ribosyl)imidazole-4-carboxamide from 5-amino-1-(5-phospho-D-ribosyl)imidazole-4-carboxylate: step 1/2. This is Phosphoribosylaminoimidazole-succinocarboxamide synthase from Vibrio cholerae serotype O1 (strain ATCC 39315 / El Tor Inaba N16961).